The chain runs to 342 residues: Ferredoxin--NADP reductase (342 aa).

The FAD site is built by Cys-17, Asp-36, Gln-44, Tyr-49, Ile-89, Phe-124, Asp-289, and Thr-330.

Belongs to the ferredoxin--NADP reductase type 2 family. Homodimer. The cofactor is FAD.

The catalysed reaction is 2 reduced [2Fe-2S]-[ferredoxin] + NADP(+) + H(+) = 2 oxidized [2Fe-2S]-[ferredoxin] + NADPH. The polypeptide is Ferredoxin--NADP reductase (Rhodopseudomonas palustris (strain BisB18)).